The following is a 274-amino-acid chain: Diaminopimelate epimerase (274 aa).

Substrate contacts are provided by asparagine 11, glutamine 44, and asparagine 64. Cysteine 73 serves as the catalytic Proton donor. Substrate contacts are provided by residues 74–75, asparagine 157, asparagine 190, and 208–209; these read GN and ER. Cysteine 217 (proton acceptor) is an active-site residue. 218 to 219 is a binding site for substrate; sequence GS.

It belongs to the diaminopimelate epimerase family. As to quaternary structure, homodimer.

It localises to the cytoplasm. It carries out the reaction (2S,6S)-2,6-diaminopimelate = meso-2,6-diaminopimelate. The protein operates within amino-acid biosynthesis; L-lysine biosynthesis via DAP pathway; DL-2,6-diaminopimelate from LL-2,6-diaminopimelate: step 1/1. Catalyzes the stereoinversion of LL-2,6-diaminopimelate (L,L-DAP) to meso-diaminopimelate (meso-DAP), a precursor of L-lysine and an essential component of the bacterial peptidoglycan. This Sodalis glossinidius (strain morsitans) protein is Diaminopimelate epimerase.